The chain runs to 60 residues: Probable tautomerase SAG1079 (60 aa).

The Proton acceptor; via imino nitrogen role is filled by P2.

This sequence belongs to the 4-oxalocrotonate tautomerase family.

This chain is Probable tautomerase SAG1079, found in Streptococcus agalactiae serotype V (strain ATCC BAA-611 / 2603 V/R).